The chain runs to 39 residues: Putative beta-neurotoxin (39 aa).

Residues 1–39 are disordered; it reads GGKEGYPLNSSNGCKSGRFAGTNSNENTECKGXDAENGY. Positions 3-39 constitute an LCN-type CS-alpha/beta domain; that stretch reads KEGYPLNSSNGCKSGRFAGTNSNENTECKGXDAENGY. Positions 28–39 are enriched in basic and acidic residues; it reads TECKGXDAENGY.

It belongs to the long (4 C-C) scorpion toxin superfamily. Sodium channel inhibitor family. Beta subfamily. Expressed by the venom gland.

Its subcellular location is the secreted. Its function is as follows. Beta toxins bind voltage-independently at site-4 of sodium channels (Nav) and shift the voltage of activation toward more negative potentials thereby affecting sodium channel activation and promoting spontaneous and repetitive firing. This chain is Putative beta-neurotoxin, found in Tityus pachyurus (Colombian scorpion).